We begin with the raw amino-acid sequence, 249 residues long: Proteasome subunit alpha (249 aa).

Belongs to the peptidase T1A family. As to quaternary structure, the 20S proteasome core is composed of 14 alpha and 14 beta subunits that assemble into four stacked heptameric rings, resulting in a barrel-shaped structure. The two inner rings, each composed of seven catalytic beta subunits, are sandwiched by two outer rings, each composed of seven alpha subunits. The catalytic chamber with the active sites is on the inside of the barrel. Has a gated structure, the ends of the cylinder being occluded by the N-termini of the alpha-subunits. Is capped at one or both ends by the proteasome regulatory ATPase, PAN.

Its subcellular location is the cytoplasm. Its activity is regulated as follows. The formation of the proteasomal ATPase PAN-20S proteasome complex, via the docking of the C-termini of PAN into the intersubunit pockets in the alpha-rings, triggers opening of the gate for substrate entry. Interconversion between the open-gate and close-gate conformations leads to a dynamic regulation of the 20S proteasome proteolysis activity. In terms of biological role, component of the proteasome core, a large protease complex with broad specificity involved in protein degradation. In Methanosarcina barkeri (strain Fusaro / DSM 804), this protein is Proteasome subunit alpha.